Consider the following 355-residue polypeptide: Protein ATP1B4 (355 aa).

Residues 1 to 108 (MRRQLRSRRA…SLARTGQSLS (108 aa)) lie on the Nuclear side of the membrane. The interval 35–76 (EEEEAEEARVMVVPDLEEEEKEEEEEKEEDEKEEEESHHQDT) is disordered. Acidic residues predominate over residues 49–68 (DLEEEEKEEEEEKEEDEKEE). Residues 109-129 (LLLVIYFFFYASLAAVITLCM) form a helical; Signal-anchor for type II membrane protein membrane-spanning segment. Topologically, residues 130–355 (YTLFLTISPY…RVIFTLNIET (226 aa)) are perinuclear space.

It belongs to the X(+)/potassium ATPases subunit beta family. Associates with a SMAD7-transcriptional complex. Interacts with SNW1 and TOR1AIP1. Does not associate with known Na,K-ATPase alpha-subunits. Expressed in skeletal muscle (at protein level). Expressed during postnatal development in skeletal muscle and heart.

It is found in the nucleus inner membrane. Its function is as follows. May act as a transcriptional coregulator during muscle development through its interaction with SNW1. Has lost its ancestral function as a Na,K-ATPase beta-subunit. The chain is Protein ATP1B4 (ATP1B4) from Sus scrofa (Pig).